A 363-amino-acid chain; its full sequence is Ferredoxin--NADP reductase, cyanelle (363 aa).

The N-terminal 65 residues, 1 to 65 (MAFVASVPVF…TFEVDTTIRA (65 aa)), are a transit peptide targeting the cyanelle. Residues 84–206 (ANPYIGKCIY…TGPVGTTMLM (123 aa)) form the FAD-binding FR-type domain. Residues 142 to 145 (RLYS), 163 to 165 (SVK), tyrosine 169, 180 to 182 (VCS), and threonine 221 each bind FAD. 2 residues coordinate NADP(+): serine 145 and lysine 165. NADP(+)-binding positions include threonine 221, 253-254 (VP), 283-284 (SR), lysine 293, 322-323 (GL), and glutamate 361.

Belongs to the ferredoxin--NADP reductase type 1 family. Requires FAD as cofactor.

The protein localises to the plastid. Its subcellular location is the cyanelle stroma. It is found in the cyanelle thylakoid membrane. The enzyme catalyses 2 reduced [2Fe-2S]-[ferredoxin] + NADP(+) + H(+) = 2 oxidized [2Fe-2S]-[ferredoxin] + NADPH. Functionally, may play a key role in regulating the relative amounts of cyclic and non-cyclic electron flow to meet the demands of the plant for ATP and reducing power. The protein is Ferredoxin--NADP reductase, cyanelle (PETH) of Cyanophora paradoxa.